Reading from the N-terminus, the 384-residue chain is L-cysteine:1D-myo-inositol 2-amino-2-deoxy-alpha-D-glucopyranoside ligase (384 aa).

Zn(2+) is bound at residue C16. Residues 16 to 19 (CGIT), T31, and 54 to 56 (NVT) each bind L-cysteinyl-5'-AMP. The 'HIGH' region signature appears at 18-28 (ITPYDATHLGH). The 'ERGGDP' region motif lies at 159 to 164 (QSGGDP). W199 lines the L-cysteinyl-5'-AMP pocket. C203 contacts Zn(2+). 221–223 (GSD) is a binding site for L-cysteinyl-5'-AMP. H228 contacts Zn(2+). Position 255 (I255) interacts with L-cysteinyl-5'-AMP. The short motif at 261–265 (KMSKS) is the 'KMSKS' region element.

Belongs to the class-I aminoacyl-tRNA synthetase family. MshC subfamily. In terms of assembly, monomer. Requires Zn(2+) as cofactor.

The catalysed reaction is 1D-myo-inositol 2-amino-2-deoxy-alpha-D-glucopyranoside + L-cysteine + ATP = 1D-myo-inositol 2-(L-cysteinylamino)-2-deoxy-alpha-D-glucopyranoside + AMP + diphosphate + H(+). Functionally, catalyzes the ATP-dependent condensation of GlcN-Ins and L-cysteine to form L-Cys-GlcN-Ins. The protein is L-cysteine:1D-myo-inositol 2-amino-2-deoxy-alpha-D-glucopyranoside ligase of Mycobacterium leprae (strain Br4923).